A 109-amino-acid chain; its full sequence is Spermidine export protein MdtI (109 aa).

4 helical membrane passes run 6–26, 36–56, 64–84, and 88–108; these read WVHAAWLALAIVLEIVANVFL, IFGLLSLAAVLAAFSALSQAV, AYALWGGFGIAATLAAGWILF, and LNRKGWIGLVLLLAGMIMVKL.

This sequence belongs to the drug/metabolite transporter (DMT) superfamily. Small multidrug resistance (SMR) (TC 2.A.7.1) family. MdtI subfamily. In terms of assembly, forms a complex with MdtJ.

It is found in the cell inner membrane. Its function is as follows. Catalyzes the excretion of spermidine. In Escherichia coli O139:H28 (strain E24377A / ETEC), this protein is Spermidine export protein MdtI.